Reading from the N-terminus, the 235-residue chain is Putative N-acetylmannosamine-6-phosphate 2-epimerase (235 aa).

This sequence belongs to the NanE family.

The enzyme catalyses an N-acyl-D-glucosamine 6-phosphate = an N-acyl-D-mannosamine 6-phosphate. It functions in the pathway amino-sugar metabolism; N-acetylneuraminate degradation; D-fructose 6-phosphate from N-acetylneuraminate: step 3/5. In terms of biological role, converts N-acetylmannosamine-6-phosphate (ManNAc-6-P) to N-acetylglucosamine-6-phosphate (GlcNAc-6-P). In Photobacterium profundum (strain SS9), this protein is Putative N-acetylmannosamine-6-phosphate 2-epimerase.